The following is a 258-amino-acid chain: Sugar fermentation stimulation protein homolog (258 aa).

This sequence belongs to the SfsA family.

In Marinomonas sp. (strain MWYL1), this protein is Sugar fermentation stimulation protein homolog.